The primary structure comprises 1134 residues: Protocadherin 18 (1134 aa).

The signal sequence occupies residues 1–27 (MHQMNTKMHFRFALALLMAFFSHDVLA). 6 Cadherin domains span residues 28–137 (KNLK…SPQF), 138–246 (SRPV…SPAF), 247–354 (EQPS…KPEI), 361–465 (PGKE…PPRF), 466–576 (QRSR…VPVV), and 582–688 (HNNT…STAM). At 28-699 (KNLKYRIYEE…SVSRASLDVS (672 aa)) the chain is on the extracellular side. Residue asparagine 103 is glycosylated (N-linked (GlcNAc...) asparagine). Asparagine 269 carries N-linked (GlcNAc...) asparagine glycosylation. A glycan (N-linked (GlcNAc...) asparagine) is linked at asparagine 559. The chain crosses the membrane as a helical span at residues 700-720 (MIIIISLGAICAVLLVIMVLF). Topologically, residues 721 to 1134 (ATRCNREKKD…NKLLQDVRQS (414 aa)) are cytoplasmic. Disordered regions lie at residues 769–800 (LPIR…NSHQ), 868–888 (SLKD…DLGR), 941–1004 (DYRS…SSLL), and 1022–1083 (FSEC…PSSK). The segment covering 791–800 (GSRQSHNSHQ) has biased composition (polar residues). The segment covering 868-877 (SLKDSGRGDS) has biased composition (basic and acidic residues). Residues 892–1134 (IDRLLGEGFS…NKLLQDVRQS (243 aa)) form an interaction with DAB1 region. Basic and acidic residues predominate over residues 1027–1038 (EGDRSNSLERRK). The span at 1059–1082 (THFQNPTSSSGTPLGTHSSVQPSS) shows a compositional bias: polar residues.

In terms of assembly, interacts with DAB1. Predominantly expressed in kidney and lung.

Its subcellular location is the cell membrane. Functionally, potential calcium-dependent cell-adhesion protein. The protein is Protocadherin 18 (Pcdh18) of Mus musculus (Mouse).